A 219-amino-acid chain; its full sequence is Histone H1.4 (219 aa).

A compositionally biased stretch (low complexity) spans 1 to 15; sequence MSETAPAAPAAPAPA. The disordered stretch occupies residues 1–41; sequence MSETAPAAPAAPAPAEKTPVKKKARKAAGGAKRKTSGPPVS. Ser-2 carries the N-acetylserine modification. Ser-2 bears the Phosphoserine mark. Lys-17 carries the N6-acetyllysine modification. Thr-18 bears the Phosphothreonine mark. Residues 20-35 are compositionally biased toward basic residues; it reads VKKKARKAAGGAKRKT. The residue at position 26 (Lys-26) is an N6-acetyllysine; alternate. Lys-26 is modified (N6-methyllysine; alternate). Lys-34 carries the N6-(beta-hydroxybutyryl)lysine; alternate modification. Residue Lys-34 is modified to N6-succinyllysine; alternate. Ser-36 is modified (phosphoserine). The region spanning 36-109 is the H15 domain; that stretch reads SGPPVSELIT…GASGSFKLNK (74 aa). An N6-(beta-hydroxybutyryl)lysine modification is found at Lys-52. Arg-54 carries the post-translational modification Citrulline. 4 positions are modified to N6-(beta-hydroxybutyryl)lysine: Lys-64, Lys-85, Lys-90, and Lys-106. Residues 92–219 form a disordered region; the sequence is TLVQTKGTGA…KPKKTAAKKK (128 aa). A compositionally biased stretch (basic residues) spans 119–140; that stretch reads KAKRAGAAKAKKPAGAAKKPKK. A Phosphothreonine modification is found at Thr-146. Basic residues-rich tracts occupy residues 149–160 and 168–185; these read KSTKKTPKKAKK and KKAKSPKKAKATKAKKAP. Ser-150 is modified (ADP-ribosylserine). Position 187 is a phosphoserine (Ser-187). Positions 192–219 are enriched in basic residues; sequence KTVKPKAAKPKTSKPKAAKPKKTAAKKK.

This sequence belongs to the histone H1/H5 family. Post-translationally, citrullination at Arg-54 (H1R54ci) by PADI4 takes place within the DNA-binding site of H1 and results in its displacement from chromatin and global chromatin decondensation, thereby promoting pluripotency and stem cell maintenance. In terms of processing, ADP-ribosylated on Ser-55, Ser-113 and Ser-150 in response to DNA damage. H1 histones are progressively phosphorylated during the cell cycle, becoming maximally phosphorylated during late G2 phase and M phase, and being dephosphorylated sharply thereafter. Post-translationally, acetylated at Lys-26. Deacetylated at Lys-26 by SIRT1. In terms of processing, hydroxybutyrylation of histones is induced by starvation.

Its subcellular location is the nucleus. It is found in the chromosome. Histone H1 protein binds to linker DNA between nucleosomes forming the macromolecular structure known as the chromatin fiber. Histones H1 are necessary for the condensation of nucleosome chains into higher-order structured fibers. Also acts as a regulator of individual gene transcription through chromatin remodeling, nucleosome spacing and DNA methylation. The polypeptide is Histone H1.4 (Mus musculus (Mouse)).